The chain runs to 488 residues: Envelope glycoprotein gp62 (488 aa).

Residues 1–20 (MGKFLATLILFFQFCPLILG) form the signal peptide. Residues 21-442 (DYSPSCCTLT…LGLSQWAREA (422 aa)) are Extracellular-facing. N-linked (GlcNAc...) asparagine; by host glycosylation is found at Asn140 and Asn222. The CXXC motif lies at 225–228 (CIVC). 3 disulfides stabilise this stretch: Cys225–Cys228, Cys225–Cys401, and Cys393–Cys400. N-linked (GlcNAc...) asparagine; by host glycosylation is found at Asn244 and Asn272. Residues 313 to 333 (AVPVAVWLVSALAMGAGVAGR) are fusion peptide. Coiled coils occupy residues 341–387 (ASGK…LLFW) and 397–429 (QEQC…GWGL). Residues 376-392 (AQNRRGLDLLFWEQGGL) form an immunosuppression region. A CX6CC motif is present at residues 393 to 401 (CKALQEQCC). Asn404 carries N-linked (GlcNAc...) asparagine; by host glycosylation. Residues 443-463 (LQTGITLVALLLLVILAGPCI) traverse the membrane as a helical segment. Cys462 carries S-palmitoyl cysteine; by host lipidation. Residues 464–488 (LRQLRHLPSRVRYPHYSLINPESSL) lie on the Cytoplasmic side of the membrane.

The mature envelope protein (Env) consists of a trimer of SU-TM heterodimers attached by a labile interchain disulfide bond. Specific enzymatic cleavages in vivo yield mature proteins. Envelope glycoproteins are synthesized as an inactive precursor that is N-glycosylated and processed likely by host cell furin or by a furin-like protease in the Golgi to yield the mature SU and TM proteins. The cleavage site between SU and TM requires the minimal sequence [KR]-X-[KR]-R. Post-translationally, the CXXC motif is highly conserved across a broad range of retroviral envelope proteins. It is thought to participate in the formation of a labile disulfide bond possibly with the CX6CC motif present in the transmembrane protein. Isomerization of the intersubunit disulfide bond to an SU intrachain disulfide bond is thought to occur upon receptor recognition in order to allow membrane fusion. In terms of processing, the transmembrane protein is palmitoylated.

It is found in the virion membrane. The protein resides in the host cell membrane. Its function is as follows. The surface protein (SU) attaches the virus to the host cell by binding to its receptor. This interaction triggers the refolding of the transmembrane protein (TM) and is thought to activate its fusogenic potential by unmasking its fusion peptide. Fusion occurs at the host cell plasma membrane. The transmembrane protein (TM) acts as a class I viral fusion protein. Under the current model, the protein has at least 3 conformational states: pre-fusion native state, pre-hairpin intermediate state, and post-fusion hairpin state. During viral and target cell membrane fusion, the coiled coil regions (heptad repeats) assume a trimer-of-hairpins structure, positioning the fusion peptide in close proximity to the C-terminal region of the ectodomain. The formation of this structure appears to drive apposition and subsequent fusion of viral and target cell membranes. Membranes fusion leads to delivery of the nucleocapsid into the cytoplasm. This Homo sapiens (Human) protein is Envelope glycoprotein gp62 (env).